Reading from the N-terminus, the 970-residue chain is Phosphoenolpyruvate carboxylase 1 (970 aa).

Ser-15 is subject to Phosphoserine. Residues His-177, Lys-606, and Arg-647 contribute to the active site.

It belongs to the PEPCase type 1 family. As to quaternary structure, homotetramer. It depends on Mg(2+) as a cofactor.

Its subcellular location is the cytoplasm. The catalysed reaction is oxaloacetate + phosphate = phosphoenolpyruvate + hydrogencarbonate. The protein operates within photosynthesis; C4 acid pathway. With respect to regulation, by light-reversible phosphorylation. Its function is as follows. Through the carboxylation of phosphoenolpyruvate (PEP) it forms oxaloacetate, a four-carbon dicarboxylic acid source for the tricarboxylic acid cycle. This chain is Phosphoenolpyruvate carboxylase 1 (PEP1), found in Zea mays (Maize).